An 882-amino-acid polypeptide reads, in one-letter code: MRALLAQNRLVTLCGTGGVGKTRLAIQIASASELRDGLCFVDLAPITESGIVAATAARAVGLPDQPGRSTMDSLRRFIGNRRMLMVLDNCEHLLDACAALVVELLGACPELTILATSREPIGMAGEITWRVPSMSITDEAVELFADRASRVQPGFTIANHNAAAVGEICRRLDGIPLAIEFAAARVRSMSPLEIADGLDDCFRLLAGGVRGAVQRQQTLRASIDWSHALLTETEQILFRRLAPFVGGFDLAAVRAVAAGSDLDPFSVLDQLTLLVDKSLVVADDCQGRTRYRLLETVRRYALEKLGDSGEADVHARHRDYYTALAASLNTPADNDHQRLVARAETEIDNLRAAFAWSRENGHITEALQLASSLQPIWFGRAHLREGLSWFNSILEDQRFHRLAVSTAVRARALADKAMLSTWLATSPVGATDIIAPAQQALAMAREVGDPAALVRALTACGCSSGYNAEAAAPYFAEATDLARAIDDKWTLCQILYWRGVGTCISGDPNALRAAAEECRDLADTIGDRFVSRHCSLWLSLAQMWAGNLTEALELSREITAEAEASNDVPTKVLGLYTQAQVLAYCGASAAHAIAGACIAAATELGGVYQGIGYAAMTYAALAAGDVTAALEASDAARPILRAQPDQVTMHQVLMAQLALAGGDAIAARQFANDAVDATNGWHRMVALTIRARVATARGEPELARDDAHAALACGAELHIYQGMPDAMELLAGLAGEVGSHSEGVRLLGAAAALRQQTRQVRFKIWDAGYQASVTALREAMGDEDFDRAWAEGAALSTDEAIAYAQRGRGERKRPARGWGSLTPTERDVVRLVSEGLSNKDIAKRLFVSPRTVQTHLTHVYAKLGLASRVQLVDEAARRGSPS.

An HTH luxR-type domain is found at 814 to 879 (PARGWGSLTP…QLVDEAARRG (66 aa)). Positions 838–857 (NKDIAKRLFVSPRTVQTHLT) form a DNA-binding region, H-T-H motif.

This chain is Putative HTH-type transcriptional regulator Mb0914c, found in Mycobacterium bovis (strain ATCC BAA-935 / AF2122/97).